Consider the following 145-residue polypeptide: Neuropeptide-like protein 68 (145 aa).

A signal peptide spans 1–15 (MLLVLLFSLFSVGFG). The tract at residues 41-65 (SSSSEDDTPDFPSLRDKRGVDPMSI) is disordered.

Its subcellular location is the secreted. This chain is Neuropeptide-like protein 68, found in Caenorhabditis elegans.